Consider the following 157-residue polypeptide: Aspartate carbamoyltransferase regulatory chain (157 aa).

Residues Cys108, Cys113, Cys138, and Cys141 each contribute to the Zn(2+) site.

The protein belongs to the PyrI family. In terms of assembly, contains catalytic and regulatory chains. The cofactor is Zn(2+).

Involved in allosteric regulation of aspartate carbamoyltransferase. This is Aspartate carbamoyltransferase regulatory chain from Korarchaeum cryptofilum (strain OPF8).